A 408-amino-acid polypeptide reads, in one-letter code: UPF0761 membrane protein Avin_36810 (408 aa).

The next 6 membrane-spanning stretches (helical) occupy residues 33-53 (YTAL…LSVV), 92-112 (HLTW…LMTV), 132-152 (FLLH…GFAL), 174-194 (LLKV…YVAV), 209-229 (LFAA…VALF), and 238-258 (AFAA…IVLL).

This sequence belongs to the UPF0761 family.

It is found in the cell inner membrane. The chain is UPF0761 membrane protein Avin_36810 from Azotobacter vinelandii (strain DJ / ATCC BAA-1303).